Consider the following 503-residue polypeptide: Potassium voltage-gated channel subfamily V member 1 (503 aa).

Disordered stretches follow at residues 1–20 (MDLSPRNRPLLDSSSLDSGS) and 171–192 (KKDTDDQESQHESEQDFSQGPC). Topologically, residues 3–213 (LSPRNRPLLD…EKPGSSTAAR (211 aa)) are cytoplasmic. Low complexity predominate over residues 10 to 20 (LLDSSSLDSGS). The segment covering 171–184 (KKDTDDQESQHESE) has biased composition (basic and acidic residues). A helical membrane pass occupies residues 214 to 234 (IFGVISIIFVAVSIVNMALMS). Residues 235-241 (AELSWLN) are Extracellular-facing. A helical transmembrane segment spans residues 242-262 (LQLLEILEYVCISWFTGEFIL). Residues 263 to 279 (RFLCVKDRCHFLRKVPN) are Cytoplasmic-facing. A helical transmembrane segment spans residues 280–300 (IIDLLAILPFYITLLVESLSG). Over 301–312 (SHTTQELENVGR) the chain is Extracellular. Residues 313-334 (LVQVLRLLRALRMLKLGRHSTG) traverse the membrane as a helical; Voltage-sensor segment. The Cytoplasmic portion of the chain corresponds to 335–348 (LRSLGMTITQCYEE). Residues 349-369 (VGLLLLFLSVGISIFSTIEYF) form a helical membrane-spanning segment. The Selectivity filter motif lies at 395 to 400 (TVGYGD). Residues 410-430 (IVAFMCILSGILVLALPIAII) form a helical membrane-spanning segment. Over 431–503 (NDRFSACYFT…RSSGGDDFWF (73 aa)) the chain is Cytoplasmic.

This sequence belongs to the potassium channel family. V (TC 1.A.1.2) subfamily. Kv8.1/KCNV1 sub-subfamily. In terms of assembly, heteromultimer with KCNB1 and KCNB2. Interacts with KCNC4 and KCND1. As to expression, detected in brain, in neocortex, olfactory tubercle, hippocampus, dentate gyrus, piriform cortex and amygdala. Detected in Purkinje cells and granular cells of the cerebellum, in hippocampal CA4 neurons and neocortex pyramidal cells.

It localises to the cell membrane. Its function is as follows. Potassium channel subunit that does not form functional channels by itself. Modulates KCNB1 and KCNB2 channel activity by shifting the threshold for inactivation to more negative values and by slowing the rate of inactivation. Can down-regulate the channel activity of KCNB1, KCNB2, KCNC4 and KCND1, possibly by trapping them in intracellular membranes. This is Potassium voltage-gated channel subfamily V member 1 (Kcnv1) from Rattus norvegicus (Rat).